We begin with the raw amino-acid sequence, 336 residues long: Gastrula zinc finger protein XlCGF57.1 (336 aa).

11 C2H2-type zinc fingers span residues 6–28 (YTCT…MKIH), 34–56 (FICT…MKTH), 62–84 (FTCT…LTIH), 90–112 (FSCT…MKTH), 118–140 (FTCT…MKTH), 146–168 (FTCT…LKIH), 174–196 (FTCT…LKIH), 202–224 (FTCT…MKIH), 230–252 (FSCT…LTMH), 258–280 (FTCT…TKIH), and 286–308 (FSCT…LKIH).

The protein belongs to the krueppel C2H2-type zinc-finger protein family.

The protein resides in the nucleus. In terms of biological role, may be involved in transcriptional regulation. The chain is Gastrula zinc finger protein XlCGF57.1 from Xenopus laevis (African clawed frog).